The following is a 365-amino-acid chain: tRNA-specific 2-thiouridylase MnmA (365 aa).

ATP contacts are provided by residues 14–21 (AMSGGVDS) and leucine 40. Cysteine 108 (nucleophile) is an active-site residue. Residues cysteine 108 and cysteine 204 are joined by a disulfide bond. Glycine 132 lines the ATP pocket. Positions 154–156 (KDQ) are interaction with tRNA. Cysteine 204 functions as the Cysteine persulfide intermediate in the catalytic mechanism.

The protein belongs to the MnmA/TRMU family.

It localises to the cytoplasm. It catalyses the reaction S-sulfanyl-L-cysteinyl-[protein] + uridine(34) in tRNA + AH2 + ATP = 2-thiouridine(34) in tRNA + L-cysteinyl-[protein] + A + AMP + diphosphate + H(+). Functionally, catalyzes the 2-thiolation of uridine at the wobble position (U34) of tRNA, leading to the formation of s(2)U34. This is tRNA-specific 2-thiouridylase MnmA from Rickettsia africae (strain ESF-5).